Here is a 228-residue protein sequence, read N- to C-terminus: Probable endo-1,4-beta-xylanase A (228 aa).

Positions 1–18 are cleaved as a signal peptide; sequence MVSFSYLLLACSAIGALA. The N-linked (GlcNAc...) asparagine glycan is linked to N29. Positions 40–228 constitute a GH11 domain; sequence AGTPSSTGWN…SSGSASITVY (189 aa). The active-site Nucleophile is E124. E215 (proton donor) is an active-site residue.

This sequence belongs to the glycosyl hydrolase 11 (cellulase G) family.

Its subcellular location is the secreted. It catalyses the reaction Endohydrolysis of (1-&gt;4)-beta-D-xylosidic linkages in xylans.. Its pathway is glycan degradation; xylan degradation. In terms of biological role, endo-1,4-beta-xylanase involved in the hydrolysis of xylan, a major structural heterogeneous polysaccharide found in plant biomass representing the second most abundant polysaccharide in the biosphere, after cellulose. In Aspergillus fumigatus (strain CBS 144.89 / FGSC A1163 / CEA10) (Neosartorya fumigata), this protein is Probable endo-1,4-beta-xylanase A (xlnA).